Here is a 153-residue protein sequence, read N- to C-terminus: 6,7-dimethyl-8-ribityllumazine synthase (153 aa).

Residues phenylalanine 22, 56-58 (AFE), and 80-82 (AVI) each bind 5-amino-6-(D-ribitylamino)uracil. 85–86 (AT) provides a ligand contact to (2S)-2-hydroxy-3-oxobutyl phosphate. The active-site Proton donor is histidine 88. A 5-amino-6-(D-ribitylamino)uracil-binding site is contributed by phenylalanine 113. A (2S)-2-hydroxy-3-oxobutyl phosphate-binding site is contributed by arginine 127.

It belongs to the DMRL synthase family.

The enzyme catalyses (2S)-2-hydroxy-3-oxobutyl phosphate + 5-amino-6-(D-ribitylamino)uracil = 6,7-dimethyl-8-(1-D-ribityl)lumazine + phosphate + 2 H2O + H(+). Its pathway is cofactor biosynthesis; riboflavin biosynthesis; riboflavin from 2-hydroxy-3-oxobutyl phosphate and 5-amino-6-(D-ribitylamino)uracil: step 1/2. Its function is as follows. Catalyzes the formation of 6,7-dimethyl-8-ribityllumazine by condensation of 5-amino-6-(D-ribitylamino)uracil with 3,4-dihydroxy-2-butanone 4-phosphate. This is the penultimate step in the biosynthesis of riboflavin. The protein is 6,7-dimethyl-8-ribityllumazine synthase of Alkaliphilus metalliredigens (strain QYMF).